The following is a 469-amino-acid chain: Sulfate adenylyltransferase subunit 1 (469 aa).

The tr-type G domain maps to K22 to E237. The interval G31–S38 is G1. Residue G31–S38 participates in GTP binding. The interval G89–D93 is G2. The tract at residues D110–G113 is G3. GTP contacts are provided by residues D110–H114 and N165–D168. The segment at N165 to D168 is G4. Positions S202–K204 are G5.

The protein belongs to the TRAFAC class translation factor GTPase superfamily. Classic translation factor GTPase family. CysN/NodQ subfamily. In terms of assembly, heterodimer composed of CysD, the smaller subunit, and CysN.

The enzyme catalyses sulfate + ATP + H(+) = adenosine 5'-phosphosulfate + diphosphate. The protein operates within sulfur metabolism; hydrogen sulfide biosynthesis; sulfite from sulfate: step 1/3. With CysD forms the ATP sulfurylase (ATPS) that catalyzes the adenylation of sulfate producing adenosine 5'-phosphosulfate (APS) and diphosphate, the first enzymatic step in sulfur assimilation pathway. APS synthesis involves the formation of a high-energy phosphoric-sulfuric acid anhydride bond driven by GTP hydrolysis by CysN coupled to ATP hydrolysis by CysD. The chain is Sulfate adenylyltransferase subunit 1 from Methylorubrum extorquens (strain CM4 / NCIMB 13688) (Methylobacterium extorquens).